Reading from the N-terminus, the 469-residue chain is ATP-dependent protease ATPase subunit HslU (469 aa).

ATP is bound by residues I24, 66–71 (GVGKTE), D282, E347, and R419.

It belongs to the ClpX chaperone family. HslU subfamily. In terms of assembly, a double ring-shaped homohexamer of HslV is capped on each side by a ring-shaped HslU homohexamer. The assembly of the HslU/HslV complex is dependent on binding of ATP.

It localises to the cytoplasm. Functionally, ATPase subunit of a proteasome-like degradation complex; this subunit has chaperone activity. The binding of ATP and its subsequent hydrolysis by HslU are essential for unfolding of protein substrates subsequently hydrolyzed by HslV. HslU recognizes the N-terminal part of its protein substrates and unfolds these before they are guided to HslV for hydrolysis. This Listeria monocytogenes serotype 4b (strain CLIP80459) protein is ATP-dependent protease ATPase subunit HslU.